The chain runs to 177 residues: Cell division protein ZapC (177 aa).

It belongs to the ZapC family. In terms of assembly, interacts directly with FtsZ.

Its subcellular location is the cytoplasm. Functionally, contributes to the efficiency of the cell division process by stabilizing the polymeric form of the cell division protein FtsZ. Acts by promoting interactions between FtsZ protofilaments and suppressing the GTPase activity of FtsZ. This Shewanella frigidimarina (strain NCIMB 400) protein is Cell division protein ZapC.